Here is a 413-residue protein sequence, read N- to C-terminus: MKGSNTFRWAIAIGVVVAAAAFWFWHSRSESPTAAPGVAAQAPHTAAAGRRGMRDGPLAPVQAATATTQAVPRYLSGLGTVTAANTVTVRSRVDGQLIALHFQEGQQVNAGDLLAQIDPSQFKVALAQAQGQLAKDNATLANARRDLARYQQLAKTNLVSRQELDAQQALVNETQGTIKADEANVASAQLQLDWSRITAPVSGRVGLKQVDVGNQISSSDTAGIVVITQTHPIDLIFTLPESDIATVVQAQKAGKTLVVEAWDRTNSHKLSEGVLLSLDNQIDPTTGTIKIKARFTNQDDTLFPNQFVNARMLVDTEQNAVVVPAAAVQMGNEGHFVWVLNDENNVSKMRVKIGIQDNQNVVISAGLSAGDRVVTDGIDRLTEGAKVEVVEPQTTMADEKSPSRHEGQKGARA.

The signal sequence occupies residues 1–20 (MKGSNTFRWAIAIGVVVAAA). Disordered regions lie at residues 31 to 57 (SPTAAPGVAAQAPHTAAAGRRGMRDGP) and 392 to 413 (PQTTMADEKSPSRHEGQKGARA). The span at 397-413 (ADEKSPSRHEGQKGARA) shows a compositional bias: basic and acidic residues.

It belongs to the membrane fusion protein (MFP) (TC 8.A.1) family. In terms of assembly, part of a tripartite efflux system composed of MdtA, MdtB and MdtC.

It localises to the cell inner membrane. In Salmonella heidelberg (strain SL476), this protein is Multidrug resistance protein MdtA.